The sequence spans 250 residues: MLNQIIARKKEHIQTLQLPDDGHFERRSFKEALVNTHRSIGLIAEVKKASPSKGIIQPNFDPLQTAKAYEKSNADCLSVLTDEPFFQGKNEYLSLIKKHIARPILRKDFIIDSIQIEESRRIGADAILLIGEVLEPQQLHELYIEAKEKGLDILVEVHAAETLEQILNLFTPEIIGVNNRNLKTFNTTVEQTKEIAPLVPKDCLLVSESGIQTFDDLTFVKKHGASAVLVGESLMREPSQEKAVQTLFGE.

The protein belongs to the TrpC family.

It catalyses the reaction 1-(2-carboxyphenylamino)-1-deoxy-D-ribulose 5-phosphate + H(+) = (1S,2R)-1-C-(indol-3-yl)glycerol 3-phosphate + CO2 + H2O. It participates in amino-acid biosynthesis; L-tryptophan biosynthesis; L-tryptophan from chorismate: step 4/5. This Bacillus pumilus (strain SAFR-032) protein is Indole-3-glycerol phosphate synthase.